We begin with the raw amino-acid sequence, 409 residues long: Arginine deiminase (409 aa).

The Amidino-cysteine intermediate role is filled by Cys-399.

It belongs to the arginine deiminase family.

The protein localises to the cytoplasm. The enzyme catalyses L-arginine + H2O = L-citrulline + NH4(+). Its pathway is amino-acid degradation; L-arginine degradation via ADI pathway; carbamoyl phosphate from L-arginine: step 1/2. This chain is Arginine deiminase, found in Streptococcus gordonii (strain Challis / ATCC 35105 / BCRC 15272 / CH1 / DL1 / V288).